The primary structure comprises 358 residues: Sulfate/thiosulfate import ATP-binding protein CysA (358 aa).

An ABC transporter domain is found at 3–237 (IKIENLEKHF…PQTPFVTQFV (235 aa)). An ATP-binding site is contributed by 35–42 (GPSGCGKT).

This sequence belongs to the ABC transporter superfamily. Sulfate/tungstate importer (TC 3.A.1.6) family. As to quaternary structure, the complex is composed of two ATP-binding proteins (CysA), two transmembrane proteins (CysT and CysW) and a solute-binding protein (CysP).

It localises to the cell inner membrane. It carries out the reaction sulfate(out) + ATP + H2O = sulfate(in) + ADP + phosphate + H(+). The enzyme catalyses thiosulfate(out) + ATP + H2O = thiosulfate(in) + ADP + phosphate + H(+). Functionally, part of the ABC transporter complex CysAWTP involved in sulfate/thiosulfate import. Responsible for energy coupling to the transport system. The sequence is that of Sulfate/thiosulfate import ATP-binding protein CysA from Mannheimia succiniciproducens (strain KCTC 0769BP / MBEL55E).